Reading from the N-terminus, the 587-residue chain is Branchpoint-bridging protein (587 aa).

The span at 1 to 16 (MLNSRSVGSTGSNNTP) shows a compositional bias: polar residues. Disordered regions lie at residues 1–64 (MLNS…DGRG) and 121–142 (GDVV…DNHG). Residues 44–64 (DSYKSNSRMDHRPDGYHDGRG) are compositionally biased toward basic and acidic residues. Residues Ser131 and Ser133 each carry the phosphoserine modification. Residues 191–271 (YVPVKDYPEI…DKINHAIKLI (81 aa)) enclose the KH domain. CCHC-type zinc fingers lie at residues 309–326 (QVCQ…DCPE) and 334–351 (IVCR…DCPV). Disordered regions lie at residues 375–490 (GGGS…PGTS) and 551–587 (IPGA…YSNR). Polar residues predominate over residues 379-399 (AISNGNGEPQKSIEFSESGAA). Low complexity predominate over residues 410-454 (AAASTSVSSSTSSPAPWAKPASSAAPSNPAPWQQPAAPQSAPALS). Polar residues-rich tracts occupy residues 465-483 (QPTQ…SQNA) and 563-573 (SYNTSESSNLN).

It belongs to the BBP/SF1 family. U2AF large subunit (u2af59), U2AF small subunit (u2af23) and bpb1 interact to form a complex required for complex A formation.

The protein localises to the cytoplasm. It is found in the nucleus. Its function is as follows. Necessary for the splicing of pre-mRNA. The BPB1(SF1)-u2af59-u2af23 complex has a role in the recognition of the branch site (5'-UACUAAC-3'), the pyrimidine tract and the 3'-splice site at the 3'-end of introns. This Schizosaccharomyces pombe (strain 972 / ATCC 24843) (Fission yeast) protein is Branchpoint-bridging protein (bpb1).